The following is a 419-amino-acid chain: MDLLAELQWRGLVNQTTDEDGLRKLLNEERVTLYCGFDPTADSLHIGHLATILTMRRFQQAGHRPIALVGGATGLIGDPSGKKSERTLNAKETVEAWSARIKEQLGRFLDFEADGNPAKIKNNYDWIGPLDVITFLRDVGKHFSVNYMMAKESVQSRIETGISFTEFSYMMLQAYDFLRLYETEGCRLQIGGSDQWGNITAGLELIRKTKGEARAFGLTIPLVTKADGTKFGKTESGTIWLDKEKTSPYEFYQFWINTDDRDVIRYLKYFTFLSKEEIEALEQELREAPEKRAAQKTLAEEVTKLVHGEEALRQAIRISEALFSGDIANLTAAEIEQGFKDVPSFVHEGGDVPLVELLVSAGISPSKRQAREDIQNGAIYVNGERLQDVGAILTAEHRLEGRFTVIRRGKKKYYLIRYA.

L-tyrosine is bound at residue Tyr34. The 'HIGH' region signature appears at 39–48 (PTADSLHIGH). Residues Tyr169, Gln173, and Asp176 each contribute to the L-tyrosine site. The short motif at 230–234 (KFGKT) is the 'KMSKS' region element. Residue Lys233 coordinates ATP. The 68-residue stretch at 352-419 (VPLVELLVSA…KKKYYLIRYA (68 aa)) folds into the S4 RNA-binding domain.

Belongs to the class-I aminoacyl-tRNA synthetase family. TyrS type 1 subfamily. Homodimer.

Its subcellular location is the cytoplasm. It carries out the reaction tRNA(Tyr) + L-tyrosine + ATP = L-tyrosyl-tRNA(Tyr) + AMP + diphosphate + H(+). In terms of biological role, catalyzes the attachment of tyrosine to tRNA(Tyr) in a two-step reaction: tyrosine is first activated by ATP to form Tyr-AMP and then transferred to the acceptor end of tRNA(Tyr). This chain is Tyrosine--tRNA ligase (tyrS), found in Geobacillus stearothermophilus (Bacillus stearothermophilus).